The chain runs to 345 residues: Putative F-box protein At3g17265 (345 aa).

An F-box domain is found at Met-1 to Asn-46.

The polypeptide is Putative F-box protein At3g17265 (Arabidopsis thaliana (Mouse-ear cress)).